The following is a 551-amino-acid chain: Hydroxymethylpyrimidine/phosphomethylpyrimidine kinase THI20 (551 aa).

A 4-amino-5-hydroxymethyl-2-methylpyrimidine-binding site is contributed by glutamine 64. The active-site Nucleophile is the cysteine 468. Glutamate 540 (proton donor) is an active-site residue.

The protein in the N-terminal section; belongs to the ThiD family. In the C-terminal section; belongs to the thiaminase-2 family.

It carries out the reaction 4-amino-5-hydroxymethyl-2-methylpyrimidine + ATP = 4-amino-2-methyl-5-(phosphooxymethyl)pyrimidine + ADP + H(+). It catalyses the reaction 4-amino-2-methyl-5-(phosphooxymethyl)pyrimidine + ATP = 4-amino-2-methyl-5-(diphosphooxymethyl)pyrimidine + ADP. The enzyme catalyses thiamine + H2O = 5-(2-hydroxyethyl)-4-methylthiazole + 4-amino-5-hydroxymethyl-2-methylpyrimidine + H(+). It participates in cofactor biosynthesis; thiamine diphosphate biosynthesis; 4-amino-2-methyl-5-diphosphomethylpyrimidine from 5-amino-1-(5-phospho-D-ribosyl)imidazole: step 2/3. The protein operates within cofactor biosynthesis; thiamine diphosphate biosynthesis; 4-amino-2-methyl-5-diphosphomethylpyrimidine from 5-amino-1-(5-phospho-D-ribosyl)imidazole: step 3/3. Trifunctional protein with both thiamine biosynthetic and degradative activity. Within the thiamine biosynthesis pathway, catalyzes the phosphorylation of hydroxymethylpyrimidine (HMP) to hydroxymethylpyrimidine phosphate (HMP-P), as well as of HMP-P to HMP-PP. Also has thiaminase II activity and degrades thiamine using water as the nucleophile, resulting only in the formation of HMP (4-amino-2-methyl-5-hydroxymethylpyrimidine) and Thz (4-methyl-5-thiazole ethanol). This chain is Hydroxymethylpyrimidine/phosphomethylpyrimidine kinase THI20, found in Saccharomyces cerevisiae (strain ATCC 204508 / S288c) (Baker's yeast).